Here is a 701-residue protein sequence, read N- to C-terminus: Polyphosphate kinase (701 aa).

Asparagine 45 is an ATP binding site. 2 residues coordinate Mg(2+): arginine 373 and arginine 403. Residues 428–462 (PGMKIHAKLLLITRKEGDEFVRYAHIGTGNFHERT) form the PLD phosphodiesterase 1 domain. Catalysis depends on histidine 433, which acts as the Phosphohistidine intermediate. Residues tyrosine 466, arginine 562, and histidine 590 each contribute to the ATP site. The PLD phosphodiesterase 2 domain occupies 585–615 (DRFLEHPRVLVVHNDGNPQVFISSADWMERN).

The protein belongs to the polyphosphate kinase 1 (PPK1) family. It depends on Mg(2+) as a cofactor. In terms of processing, an intermediate of this reaction is the autophosphorylated ppk in which a phosphate is covalently linked to a histidine residue through a N-P bond.

The catalysed reaction is [phosphate](n) + ATP = [phosphate](n+1) + ADP. Functionally, catalyzes the reversible transfer of the terminal phosphate of ATP to form a long-chain polyphosphate (polyP). The polypeptide is Polyphosphate kinase (Vibrio cholerae serotype O1 (strain ATCC 39315 / El Tor Inaba N16961)).